The primary structure comprises 881 residues: Tyrosine-protein kinase receptor TYRO3 (881 aa).

A signal peptide spans 1–28 (MVNPGPPGLIAGLLLAALSLSSVDGTKA). 2 Ig-like C2-type domains span residues 29 to 114 (LGFV…KSVS) and 125 to 206 (PYFT…AIVE). The Extracellular portion of the chain corresponds to 29-414 (LGFVGHGYNM…QRHPHTRMSW (386 aa)). Residues Asn37 and Asn49 are each glycosylated (N-linked (GlcNAc...) asparagine). A disulfide bridge links Cys50 with Cys103. Residue Asn143 is glycosylated (N-linked (GlcNAc...) asparagine). A disulfide bond links Cys146 and Cys189. Fibronectin type-III domains follow at residues 213–306 (PPFN…TKEK) and 311–401 (IPQN…SKEE). Residues Asn216, Asn279, Asn351, and Asn365 are each glycosylated (N-linked (GlcNAc...) asparagine). The chain crosses the membrane as a helical span at residues 415–435 (VPMVLGILTALVTVVAMTLIF). Topologically, residues 436 to 881 (LRKGRKETRF…MQEEQVVITL (446 aa)) are cytoplasmic. A Protein kinase domain is found at 503-774 (FTLGRTLGKG…VDLKRRLEAI (272 aa)). ATP-binding positions include 509 to 517 (LGKGEFGSV) and Lys535. Asp640 acts as the Proton acceptor in catalysis. The residue at position 671 (Tyr671) is a Phosphotyrosine; by autocatalysis. Residues 846–881 (EWSSSAQNGEARGLLHEEEEEEEEEEMQEEQVVITL) form a disordered region. Residues 862 to 874 (EEEEEEEEEEMQE) are compositionally biased toward acidic residues.

The protein belongs to the protein kinase superfamily. Tyr protein kinase family. AXL/UFO subfamily. Tyrosine phosphorylated upon receptor stimulation.

The protein localises to the cell membrane. It catalyses the reaction L-tyrosyl-[protein] + ATP = O-phospho-L-tyrosyl-[protein] + ADP + H(+). Its function is as follows. May be involved in cell adhesion processes, particularly in the central nervous system. The polypeptide is Tyrosine-protein kinase receptor TYRO3 (tyro3) (Xenopus tropicalis (Western clawed frog)).